Here is a 483-residue protein sequence, read N- to C-terminus: MLTRSPASAAATSPTTTVTVTVTAAATSPRPSRGAAPHGHFHYAPTPSLREAASRIPALSSRRQSATAPATSSTSLPISIQSRHGPAPVASHTSSPVASDPGLGFPPSSRPQRWAGVDVVAQYSPMEPMDYTTGALLSSQAASSSNNQAVARGSIESRPSHIPNTVGPMASHEEQASALASTSEATAAPIPHGPTVAVAVPPTPGVYSAAPQPHPLSHTPQTGTPVKRRNSQGDVTHNQVEAASAGQSGPHSPKRARLAPKIVSRRYEHCPVEDLVVLIAHMLGELIELNDEAAQKVGQRHNLTRFHSRTTPGISVLDYLHRLAKHAYLSPPILLSMVYYIDRLCALYSDFTINTLTVHRFLITAATVAAKGLSDSFLTNTLYARVGGVRVAELNMLELEFLHRVDWKIVPDPDVLVAYYGGLVARCPGYILECPEPEEADDEDEDEELDESDAIGDDDDDIDGEGGEREEETSSSQRDRHAT.

Low complexity-rich tracts occupy residues 1-32 (MLTR…PRPS), 60-80 (SSRR…PISI), and 176-200 (ASAL…AVAV). Disordered regions lie at residues 1–112 (MLTR…SRPQ), 164–234 (NTVG…SQGD), and 434–483 (CPEP…RHAT). Residues 435–473 (PEPEEADDEDEDEELDESDAIGDDDDDIDGEGGEREEET) show a composition bias toward acidic residues.

This sequence belongs to the cyclin family.

Its function is as follows. Negative regulator, together with pgov, of the transcriptional activator nuc-1, which controls the expression of phosphorous acquisition enzymes. This is Nuc-1 negative regulatory protein preg (preg) from Neurospora crassa (strain ATCC 24698 / 74-OR23-1A / CBS 708.71 / DSM 1257 / FGSC 987).